An 81-amino-acid polypeptide reads, in one-letter code: ATP synthase subunit c, chloroplastic (81 aa).

The next 2 membrane-spanning stretches (helical) occupy residues 3–23 (PIISAASVIAAGLAVGLASIG) and 57–77 (LAFMEALTIYGLVVALALLFA).

The protein belongs to the ATPase C chain family. As to quaternary structure, F-type ATPases have 2 components, F(1) - the catalytic core - and F(0) - the membrane proton channel. F(1) has five subunits: alpha(3), beta(3), gamma(1), delta(1), epsilon(1). F(0) has four main subunits: a(1), b(1), b'(1) and c(10-14). The alpha and beta chains form an alternating ring which encloses part of the gamma chain. F(1) is attached to F(0) by a central stalk formed by the gamma and epsilon chains, while a peripheral stalk is formed by the delta, b and b' chains.

The protein localises to the plastid. Its subcellular location is the chloroplast thylakoid membrane. Its function is as follows. F(1)F(0) ATP synthase produces ATP from ADP in the presence of a proton or sodium gradient. F-type ATPases consist of two structural domains, F(1) containing the extramembraneous catalytic core and F(0) containing the membrane proton channel, linked together by a central stalk and a peripheral stalk. During catalysis, ATP synthesis in the catalytic domain of F(1) is coupled via a rotary mechanism of the central stalk subunits to proton translocation. In terms of biological role, key component of the F(0) channel; it plays a direct role in translocation across the membrane. A homomeric c-ring of between 10-14 subunits forms the central stalk rotor element with the F(1) delta and epsilon subunits. This Cicer arietinum (Chickpea) protein is ATP synthase subunit c, chloroplastic.